Here is a 340-residue protein sequence, read N- to C-terminus: tRNA N6-adenosine threonylcarbamoyltransferase (340 aa).

Fe cation contacts are provided by histidine 111 and histidine 115. Residues 133 to 137, aspartate 166, glycine 179, aspartate 183, and asparagine 272 each bind substrate; that span reads VVSGG. Aspartate 300 contributes to the Fe cation binding site.

This sequence belongs to the KAE1 / TsaD family. Fe(2+) is required as a cofactor.

It is found in the cytoplasm. It carries out the reaction L-threonylcarbamoyladenylate + adenosine(37) in tRNA = N(6)-L-threonylcarbamoyladenosine(37) in tRNA + AMP + H(+). In terms of biological role, required for the formation of a threonylcarbamoyl group on adenosine at position 37 (t(6)A37) in tRNAs that read codons beginning with adenine. Is involved in the transfer of the threonylcarbamoyl moiety of threonylcarbamoyl-AMP (TC-AMP) to the N6 group of A37, together with TsaE and TsaB. TsaD likely plays a direct catalytic role in this reaction. The chain is tRNA N6-adenosine threonylcarbamoyltransferase from Geobacter sulfurreducens (strain ATCC 51573 / DSM 12127 / PCA).